Consider the following 278-residue polypeptide: 2-dehydro-3-deoxyphosphooctonate aldolase (278 aa).

This sequence belongs to the KdsA family.

It localises to the cytoplasm. The catalysed reaction is D-arabinose 5-phosphate + phosphoenolpyruvate + H2O = 3-deoxy-alpha-D-manno-2-octulosonate-8-phosphate + phosphate. The protein operates within carbohydrate biosynthesis; 3-deoxy-D-manno-octulosonate biosynthesis; 3-deoxy-D-manno-octulosonate from D-ribulose 5-phosphate: step 2/3. Its pathway is bacterial outer membrane biogenesis; lipopolysaccharide biosynthesis. The protein is 2-dehydro-3-deoxyphosphooctonate aldolase of Bartonella quintana (strain Toulouse) (Rochalimaea quintana).